The following is a 386-amino-acid chain: Antilisterial bacteriocin subtilosin biosynthesis protein AlbE (386 aa).

In terms of biological role, involved in the production of the bacteriocin subtilosin. The sequence is that of Antilisterial bacteriocin subtilosin biosynthesis protein AlbE (albE) from Bacillus subtilis.